We begin with the raw amino-acid sequence, 416 residues long: Histidine--tRNA ligase (416 aa).

This sequence belongs to the class-II aminoacyl-tRNA synthetase family.

The protein localises to the cytoplasm. It carries out the reaction tRNA(His) + L-histidine + ATP = L-histidyl-tRNA(His) + AMP + diphosphate + H(+). This Methanococcus maripaludis (strain DSM 14266 / JCM 13030 / NBRC 101832 / S2 / LL) protein is Histidine--tRNA ligase.